We begin with the raw amino-acid sequence, 260 residues long: Indole-3-glycerol phosphate synthase (260 aa).

This sequence belongs to the TrpC family.

The enzyme catalyses 1-(2-carboxyphenylamino)-1-deoxy-D-ribulose 5-phosphate + H(+) = (1S,2R)-1-C-(indol-3-yl)glycerol 3-phosphate + CO2 + H2O. It functions in the pathway amino-acid biosynthesis; L-tryptophan biosynthesis; L-tryptophan from chorismate: step 4/5. This is Indole-3-glycerol phosphate synthase from Staphylococcus aureus (strain bovine RF122 / ET3-1).